A 242-amino-acid polypeptide reads, in one-letter code: Small ribosomal subunit protein uS3 (242 aa).

The region spanning 39–110 (IRRFIHKKYG…QVRINVVEVE (72 aa)) is the KH type-2 domain. Residues 216 to 242 (QSMPVGASPRRRGNRRPQQFEDRSNEG) form a disordered region. Over residues 233-242 (QQFEDRSNEG) the composition is skewed to basic and acidic residues.

The protein belongs to the universal ribosomal protein uS3 family. Part of the 30S ribosomal subunit. Forms a tight complex with proteins S10 and S14.

In terms of biological role, binds the lower part of the 30S subunit head. Binds mRNA in the 70S ribosome, positioning it for translation. The protein is Small ribosomal subunit protein uS3 of Prochlorococcus marinus (strain MIT 9303).